Here is a 290-residue protein sequence, read N- to C-terminus: Beta-lactamase OXY-2 (290 aa).

A signal peptide spans 1-27 (MIKSSWRKIAMLAAAVPLLLASGALWA). The active-site Acyl-ester intermediate is the serine 72. A substrate-binding site is contributed by 236–238 (KTG).

This sequence belongs to the class-A beta-lactamase family.

It carries out the reaction a beta-lactam + H2O = a substituted beta-amino acid. In terms of biological role, hydrolyzes broad-spectrum beta-lactam antibiotics. Active against all third-generation cephalosporins but ceftazidime. This Klebsiella oxytoca protein is Beta-lactamase OXY-2 (bla).